A 213-amino-acid polypeptide reads, in one-letter code: Proteasome subunit beta (213 aa).

The propeptide at 1–11 (MPEQYQESMTG) is removed in mature form; by autocatalysis. T12 acts as the Nucleophile in catalysis.

This sequence belongs to the peptidase T1B family. As to quaternary structure, the 20S proteasome core is composed of 14 alpha and 14 beta subunits that assemble into four stacked heptameric rings, resulting in a barrel-shaped structure. The two inner rings, each composed of seven catalytic beta subunits, are sandwiched by two outer rings, each composed of seven alpha subunits. The catalytic chamber with the active sites is on the inside of the barrel. Has a gated structure, the ends of the cylinder being occluded by the N-termini of the alpha-subunits. Is capped at one or both ends by the proteasome regulatory ATPase, PAN.

It localises to the cytoplasm. The enzyme catalyses Cleavage of peptide bonds with very broad specificity.. With respect to regulation, the formation of the proteasomal ATPase PAN-20S proteasome complex, via the docking of the C-termini of PAN into the intersubunit pockets in the alpha-rings, triggers opening of the gate for substrate entry. Interconversion between the open-gate and close-gate conformations leads to a dynamic regulation of the 20S proteasome proteolysis activity. In terms of biological role, component of the proteasome core, a large protease complex with broad specificity involved in protein degradation. This Methanoregula boonei (strain DSM 21154 / JCM 14090 / 6A8) protein is Proteasome subunit beta.